Consider the following 467-residue polypeptide: Mothers against decapentaplegic homolog 2 (467 aa).

Ser-2 bears the N-acetylserine mark. Position 8 is a phosphothreonine (Thr-8). In terms of domain architecture, MH1 spans 10-176 (PVVKRLLGWK…YQRVETPVLP (167 aa)). At Lys-19 the chain carries N6-acetyllysine. Residues Cys-74, Cys-149, Cys-161, and His-166 each contribute to the Zn(2+) site. Over residues 207 to 217 (PAGIEPQSNYI) the composition is skewed to polar residues. The disordered stretch occupies residues 207–251 (PAGIEPQSNYIPETPPPGYISEDGETSDQQLNQSMDTGSPAELSP). A Phosphothreonine modification is found at Thr-220. The short motif at 221–225 (PPPGY) is the PY-motif element. Residues 233 to 243 (SDQQLNQSMDT) are compositionally biased toward polar residues. Ser-240 carries the phosphoserine; by CAMK2 modification. Residues Ser-245, Ser-250, Ser-255, Ser-458, Ser-460, and Ser-464 each carry the phosphoserine modification. The MH2 domain maps to 274 to 467 (WCSIAYYELN…SPSVRCSSMS (194 aa)). A phosphoserine; by TGFBR1 mark is found at Ser-465 and Ser-467.

Belongs to the dwarfin/SMAD family. In terms of assembly, monomer; in the absence of TGF-beta. Heterodimer; in the presence of TGF-beta. Forms a heterodimer with co-SMAD, SMAD4, in the nucleus to form the transactivation complex SMAD2/SMAD4. Found in a complex with SMAD3 and TRIM33 upon addition of TGF-beta. Identified in a complex that contains at least ZNF451, SMAD2, SMAD3 and SMAD4. Interacts (via the MH2 domain) with ZFYVE9; may form trimers with the SMAD4 co-SMAD. Interacts with TAZ/WWRT1. Interacts with FOXH1. Interacts with SNW1. Interacts with CREB-binding protein (CBP) and EP300. Interacts with SNON. Interacts with ALK4/ACVR1B. Interacts with SKOR1. Interacts with SKOR2. Interacts with PRDM16. Interacts (via MH2 domain) with LEMD3. Interacts with RBPMS. Interacts with WWP1. Interacts (dephosphorylated form, via the MH1 and MH2 domains) with RANBP3 (via its C-terminal R domain); the interaction results in the export of dephosphorylated SMAD3 out of the nucleus and termination of the TGF-beta signaling. Interacts with PDPK1 (via PH domain). Interacts with DAB2; the interactions are enhanced upon TGF-beta stimulation. Interacts with USP15. Interacts with PPP5C. Interacts with LDLRAD4 (via the SMAD interaction motif). Interacts (via MH2 domain) with PMEPA1 (via the SMAD interaction motif). Interacts with ZFHX3. Interacts with ZNF451. Interacts with SMURF2 when phosphorylated on Ser-465/467. Interacts with PPM1A. Interacts with TGF-beta. Interacts with TGFBR1. Interacts with TGIF. Interacts with SMAD3 and TRIM33. Interacts with ZNF580. Interacts with NEDD4L in response to TGF-beta. Interacts with HGS. Interacts with AIP1. Interacts with WWP1. Interacts with PML. Interacts weakly with ZNF8. Interacts (when phosphorylated) with RNF111; RNF111 acts as an enhancer of the transcriptional responses by mediating ubiquitination and degradation of SMAD2 inhibitors. Interacts with YAP1 (when phosphorylated at 'Ser-112'). Interacts when phosphorylated with IPO7; the interaction facilitates translocation of SMAD2 to the nucleus. Interacts with MTMR4; negatively regulates TGF-beta signaling through SMAD2 dephosphorylation and retention in endosomes. In response to TGF-beta, phosphorylated on the C-terminal SXS motif by TGF-beta and activin type 1 receptor kinases, phosphorylation declines progressively in a KMT5A-dependent manner. Phosphorylation in this motif is required for interaction with a number of proteins including SMURF2, SNON and SMAD4 in response to TGF-beta. Dephosphorylated in this motif by PPM1A leading to disruption of the SMAD2/3-SMAD4 complex, nuclear export and termination of the TGF-beta signaling. In response to decorin, the naturally occurring inhibitor of TGF-beta signaling, phosphorylated on Ser-240 by CaMK2. Phosphorylated by MAPK3 upon EGF stimulation; which increases transcriptional activity and stability, and is blocked by calmodulin. Phosphorylated by PDPK1. In terms of processing, acetylated on Lys-19 by coactivators in response to TGF-beta signaling, which increases transcriptional activity. Post-translationally, in response to TGF-beta, ubiquitinated by NEDD4L; which promotes its degradation. Monoubiquitinated, leading to prevent DNA-binding. Deubiquitination by USP15 alleviates inhibition and promotes activation of TGF-beta target genes. Ubiquitinated by RNF111, leading to its degradation: only SMAD2 proteins that are 'in use' are targeted by RNF111, RNF111 playing a key role in activating SMAD2 and regulating its turnover. Expressed in cardiomyocytes.

It localises to the cytoplasm. Its subcellular location is the nucleus. Functionally, receptor-regulated SMAD (R-SMAD) that is an intracellular signal transducer and transcriptional modulator activated by TGF-beta (transforming growth factor) and activin type 1 receptor kinases. Binds the TRE element in the promoter region of many genes that are regulated by TGF-beta and, on formation of the SMAD2/SMAD4 complex, activates transcription. Promotes TGFB1-mediated transcription of odontoblastic differentiation genes in dental papilla cells. Positively regulates PDPK1 kinase activity by stimulating its dissociation from the 14-3-3 protein YWHAQ which acts as a negative regulator. The polypeptide is Mothers against decapentaplegic homolog 2 (Smad2) (Rattus norvegicus (Rat)).